We begin with the raw amino-acid sequence, 183 residues long: Probable GTP-binding protein EngB (183 aa).

Residues 18-183 (DQNEIVFWGR…LSDLVEHFEL (166 aa)) enclose the EngB-type G domain. GTP-binding positions include 26–33 (GRSNVGKS), 52–56 (GRTRL), 70–73 (DLPG), 137–140 (TKID), and 166–168 (VSS). Mg(2+) contacts are provided by Ser33 and Thr54.

It belongs to the TRAFAC class TrmE-Era-EngA-EngB-Septin-like GTPase superfamily. EngB GTPase family. Mg(2+) serves as cofactor.

In terms of biological role, necessary for normal cell division and for the maintenance of normal septation. The protein is Probable GTP-binding protein EngB of Metamycoplasma arthritidis (strain 158L3-1) (Mycoplasma arthritidis).